Reading from the N-terminus, the 228-residue chain is uncharacterized protein (228 aa).

Residues 1–23 form the signal peptide; that stretch reads MIRHTRLLLASLCLIATGARASA.

This is an uncharacterized protein from Methylorubrum extorquens (strain ATCC 14718 / DSM 1338 / JCM 2805 / NCIMB 9133 / AM1) (Methylobacterium extorquens).